A 513-amino-acid chain; its full sequence is Histidine ammonia-lyase (513 aa).

The 5-imidazolinone (Ala-Gly) cross-link spans 142–144 (ASG). A 2,3-didehydroalanine (Ser) modification is found at Ser143.

It belongs to the PAL/histidase family. In terms of processing, contains an active site 4-methylidene-imidazol-5-one (MIO), which is formed autocatalytically by cyclization and dehydration of residues Ala-Ser-Gly.

The protein localises to the cytoplasm. It carries out the reaction L-histidine = trans-urocanate + NH4(+). It functions in the pathway amino-acid degradation; L-histidine degradation into L-glutamate; N-formimidoyl-L-glutamate from L-histidine: step 1/3. The protein is Histidine ammonia-lyase of Roseobacter denitrificans (strain ATCC 33942 / OCh 114) (Erythrobacter sp. (strain OCh 114)).